A 314-amino-acid chain; its full sequence is Methionyl-tRNA formyltransferase (314 aa).

110-113 (SLLP) contributes to the (6S)-5,6,7,8-tetrahydrofolate binding site.

Belongs to the Fmt family.

It catalyses the reaction L-methionyl-tRNA(fMet) + (6R)-10-formyltetrahydrofolate = N-formyl-L-methionyl-tRNA(fMet) + (6S)-5,6,7,8-tetrahydrofolate + H(+). Functionally, attaches a formyl group to the free amino group of methionyl-tRNA(fMet). The formyl group appears to play a dual role in the initiator identity of N-formylmethionyl-tRNA by promoting its recognition by IF2 and preventing the misappropriation of this tRNA by the elongation apparatus. This Dichelobacter nodosus (strain VCS1703A) protein is Methionyl-tRNA formyltransferase.